Consider the following 297-residue polypeptide: Protoheme IX farnesyltransferase (297 aa).

The next 9 helical transmembrane spans lie at 12–32 (PGII…AAKG), 36–56 (YALF…GCVF), 85–105 (VSLV…YLAA), 108–128 (LAMW…SLYM), 133–153 (VYGT…GYCA), 163–183 (LILL…IAIF), 209–229 (ITLY…SGYA), 230–250 (GYKY…MALQ), and 266–286 (FIFS…DFMV).

The protein belongs to the UbiA prenyltransferase family. Protoheme IX farnesyltransferase subfamily.

The protein localises to the cell inner membrane. The enzyme catalyses heme b + (2E,6E)-farnesyl diphosphate + H2O = Fe(II)-heme o + diphosphate. The protein operates within porphyrin-containing compound metabolism; heme O biosynthesis; heme O from protoheme: step 1/1. Its function is as follows. Converts heme B (protoheme IX) to heme O by substitution of the vinyl group on carbon 2 of heme B porphyrin ring with a hydroxyethyl farnesyl side group. The polypeptide is Protoheme IX farnesyltransferase (Sodalis glossinidius (strain morsitans)).